Reading from the N-terminus, the 315-residue chain is Ribose-phosphate pyrophosphokinase (315 aa).

Residues 37–39 (DGE) and 96–97 (RQ) each bind ATP. The Mg(2+) site is built by histidine 131 and aspartate 170. The active site involves lysine 194. Residues arginine 196, aspartate 220, and 224-228 (DTGGT) contribute to the D-ribose 5-phosphate site.

Belongs to the ribose-phosphate pyrophosphokinase family. Class I subfamily. In terms of assembly, homohexamer. Mg(2+) serves as cofactor.

Its subcellular location is the cytoplasm. It catalyses the reaction D-ribose 5-phosphate + ATP = 5-phospho-alpha-D-ribose 1-diphosphate + AMP + H(+). Its pathway is metabolic intermediate biosynthesis; 5-phospho-alpha-D-ribose 1-diphosphate biosynthesis; 5-phospho-alpha-D-ribose 1-diphosphate from D-ribose 5-phosphate (route I): step 1/1. Involved in the biosynthesis of the central metabolite phospho-alpha-D-ribosyl-1-pyrophosphate (PRPP) via the transfer of pyrophosphoryl group from ATP to 1-hydroxyl of ribose-5-phosphate (Rib-5-P). This chain is Ribose-phosphate pyrophosphokinase, found in Yersinia pestis.